We begin with the raw amino-acid sequence, 125 residues long: Small ribosomal subunit protein uS13 (125 aa).

Residues His-91–Lys-125 form a disordered region. Residues Arg-107–Lys-125 are compositionally biased toward basic residues.

This sequence belongs to the universal ribosomal protein uS13 family. In terms of assembly, part of the 30S ribosomal subunit. Forms a loose heterodimer with protein S19. Forms two bridges to the 50S subunit in the 70S ribosome.

In terms of biological role, located at the top of the head of the 30S subunit, it contacts several helices of the 16S rRNA. In the 70S ribosome it contacts the 23S rRNA (bridge B1a) and protein L5 of the 50S subunit (bridge B1b), connecting the 2 subunits; these bridges are implicated in subunit movement. Contacts the tRNAs in the A and P-sites. In Chlorobium phaeovibrioides (strain DSM 265 / 1930) (Prosthecochloris vibrioformis (strain DSM 265)), this protein is Small ribosomal subunit protein uS13.